We begin with the raw amino-acid sequence, 229 residues long: UPF0758 protein CLL_A0562 (229 aa).

The 123-residue stretch at 107-229 (KIMSPNDLAM…FISLKEKGFI (123 aa)) folds into the MPN domain. Residues His178, His180, and Asp191 each coordinate Zn(2+). A JAMM motif motif is present at residues 178-191 (HNHPSGDPTPSKED).

Belongs to the UPF0758 family.

The chain is UPF0758 protein CLL_A0562 from Clostridium botulinum (strain Eklund 17B / Type B).